Reading from the N-terminus, the 343-residue chain is 3-hydroxy-3-methylglutaryl-CoA lyase, cytoplasmic (343 aa).

G2 carries the N-myristoyl glycine lipid modification. Residues 48-315 (VKIVEVGPRD…NTGVDLYKVM (268 aa)) enclose the Pyruvate carboxyltransferase domain. R56 lines the substrate pocket. Residues D57, H248, and H250 each contribute to the a divalent metal cation site. C281 is an active-site residue. An a divalent metal cation-binding site is contributed by N290.

It belongs to the HMG-CoA lyase family. A divalent metal cation serves as cofactor.

Its subcellular location is the cytoplasm. It is found in the cytosol. It localises to the endoplasmic reticulum membrane. It catalyses the reaction (3S)-3-hydroxy-3-methylglutaryl-CoA = acetoacetate + acetyl-CoA. It functions in the pathway metabolic intermediate metabolism; (S)-3-hydroxy-3-methylglutaryl-CoA degradation; acetoacetate from (S)-3-hydroxy-3-methylglutaryl-CoA: step 1/1. In terms of biological role, non-mitochondrial 3-hydroxy-3-methylglutaryl-CoA lyase that catalyzes a cation-dependent cleavage of (S)-3-hydroxy-3-methylglutaryl-CoA into acetyl-CoA and acetoacetate, a key step in ketogenesis, the products of which support energy production in nonhepatic animal tissues. In Mus musculus (Mouse), this protein is 3-hydroxy-3-methylglutaryl-CoA lyase, cytoplasmic (Hmgcll1).